The following is a 155-amino-acid chain: Small ribosomal subunit protein bS6 (155 aa).

Residues 94–155 are disordered; sequence EKHEEGPSAM…RPRRPREDRV (62 aa).

This sequence belongs to the bacterial ribosomal protein bS6 family.

In terms of biological role, binds together with bS18 to 16S ribosomal RNA. This is Small ribosomal subunit protein bS6 from Rhizobium johnstonii (strain DSM 114642 / LMG 32736 / 3841) (Rhizobium leguminosarum bv. viciae).